Consider the following 378-residue polypeptide: TelA-like protein SAB1262 (378 aa).

It belongs to the TelA family.

The chain is TelA-like protein SAB1262 from Staphylococcus aureus (strain bovine RF122 / ET3-1).